Here is a 312-residue protein sequence, read N- to C-terminus: MAIYLDFENHIKEIQNEIELALIRGDEDAKEILEKRLDKEVKSIYSNLTDFQKLQLARHPDRPYAMDYIDLILKDKYEVFGDRHYNDDKAIVCFIGKIDNVPVVVIGEEKGRGTKNKLLRNFGMPNPCGYRKALKMAKFAEKFNLPILMLVDTAGAYPGIGAEERGQSEAIAKNLQEFASLKVPTISVIIGEGGSGGALAIAVADKLAMMEYSIFSVISPEGCAAILWDDPSKTEVAIKAMKITPRDLKEAGLIDDIILEPSKGAHRDKFSAANTIKEYFLDALRTIQQDPHFLDNRYQKLMSLGSFVESMN.

A CoA carboxyltransferase C-terminal domain is found at 36–286 (RLDKEVKSIY…KEYFLDALRT (251 aa)).

This sequence belongs to the AccA family. As to quaternary structure, acetyl-CoA carboxylase is a heterohexamer composed of biotin carboxyl carrier protein (AccB), biotin carboxylase (AccC) and two subunits each of ACCase subunit alpha (AccA) and ACCase subunit beta (AccD).

It is found in the cytoplasm. The catalysed reaction is N(6)-carboxybiotinyl-L-lysyl-[protein] + acetyl-CoA = N(6)-biotinyl-L-lysyl-[protein] + malonyl-CoA. Its pathway is lipid metabolism; malonyl-CoA biosynthesis; malonyl-CoA from acetyl-CoA: step 1/1. Its function is as follows. Component of the acetyl coenzyme A carboxylase (ACC) complex. First, biotin carboxylase catalyzes the carboxylation of biotin on its carrier protein (BCCP) and then the CO(2) group is transferred by the carboxyltransferase to acetyl-CoA to form malonyl-CoA. The sequence is that of Acetyl-coenzyme A carboxylase carboxyl transferase subunit alpha from Helicobacter pylori (strain Shi470).